The following is a 421-amino-acid chain: Putative B3 domain-containing protein Os08g0333500 (421 aa).

Positions 1-51 form a DNA-binding region, TF-B3; the sequence is MTVELEKIAGSFFISKGWKTFVHRTGLLSGQYIRFQVLTPSKINVLLFDKK. Residues 92-121 are disordered; sequence SHTSNKETSSDSRTESMTDIPSSSDNSGET. Residues 95–107 show a composition bias toward basic and acidic residues; the sequence is SNKETSSDSRTES. The span at 108–121 shows a compositional bias: polar residues; the sequence is MTDIPSSSDNSGET.

It localises to the nucleus. The sequence is that of Putative B3 domain-containing protein Os08g0333500 from Oryza sativa subsp. japonica (Rice).